The following is a 508-amino-acid chain: MGLPWYRVHTVVLNDPGRLISVHIMHTALVAGWAGSMTLYELAVFDPSDPVLDPMWRQGMFVIPFMTRLGIKDSWSGWNITGETVINPGIWSYEGVAVAHIVFSGLCFLAAIWHWVYWDLDIFCDERTGKRCLDLPKVFGIHLFLSGVACFGFGAFHVTGLYGPGIWVSDPYGLTGKIQPVDPAWGAEGFDPFVPGGIASHHIAAGILGILAGLFHLSVRPPQRLYVGLRMGNIETVLSSSIAAVFFAAFIVAGTMWYGSATTPVELFGPTRYQWDQGYFQQEIDRRVRAGLAENLSLSEAWSKIPEKLAFYDYIGNNPAKGGLFRAGAMDNGDGIAVGWLGHPIFKDKEGNELFVRRMPTFFETFPVVLVDKEGIVKADVPFRRAESKYSVEQVGVTVEFYGGGLDRVSFGDPAIVKKYARRAQLGEIFELDRATLKSDGVFRSSPRGWFTFGHATFALLFFSGHIWHGARTLFRDVFAGIDSDLDDRIEFGAFQKLGDPTTKRQVV.

Transmembrane regions (helical) follow at residues 21 to 36 (SVHI…WAGS), 101 to 115 (IVFS…IWHW), 140 to 156 (GIHL…FGAF), 203 to 218 (IAAG…FHLS), 237 to 252 (VLSS…AFIV), and 457 to 472 (TFAL…HGAR).

The protein belongs to the PsbB/PsbC family. PsbB subfamily. As to quaternary structure, PSII is composed of 1 copy each of membrane proteins PsbA, PsbB, PsbC, PsbD, PsbE, PsbF, PsbH, PsbI, PsbJ, PsbK, PsbL, PsbM, PsbT, PsbX, PsbY, PsbZ, Psb30/Ycf12, at least 3 peripheral proteins of the oxygen-evolving complex and a large number of cofactors. It forms dimeric complexes. The cofactor is Binds multiple chlorophylls. PSII binds additional chlorophylls, carotenoids and specific lipids..

It is found in the plastid. The protein resides in the chloroplast thylakoid membrane. In terms of biological role, one of the components of the core complex of photosystem II (PSII). It binds chlorophyll and helps catalyze the primary light-induced photochemical processes of PSII. PSII is a light-driven water:plastoquinone oxidoreductase, using light energy to abstract electrons from H(2)O, generating O(2) and a proton gradient subsequently used for ATP formation. This is Photosystem II CP47 reaction center protein from Pinus thunbergii (Japanese black pine).